Here is a 391-residue protein sequence, read N- to C-terminus: S-adenosylmethionine synthase (391 aa).

An ATP-binding site is contributed by H14. D16 contacts Mg(2+). Residue E42 coordinates K(+). 2 residues coordinate L-methionine: E55 and Q98. The interval 98 to 108 (QSVDIAIGVDE) is flexible loop. Residues 172–174 (DGK), 238–239 (RF), D247, 253–254 (RK), A270, and K274 contribute to the ATP site. Residue D247 coordinates L-methionine. K278 provides a ligand contact to L-methionine.

Belongs to the AdoMet synthase family. As to quaternary structure, homotetramer; dimer of dimers. Mg(2+) is required as a cofactor. K(+) serves as cofactor.

The protein resides in the cytoplasm. The catalysed reaction is L-methionine + ATP + H2O = S-adenosyl-L-methionine + phosphate + diphosphate. Its pathway is amino-acid biosynthesis; S-adenosyl-L-methionine biosynthesis; S-adenosyl-L-methionine from L-methionine: step 1/1. In terms of biological role, catalyzes the formation of S-adenosylmethionine (AdoMet) from methionine and ATP. The overall synthetic reaction is composed of two sequential steps, AdoMet formation and the subsequent tripolyphosphate hydrolysis which occurs prior to release of AdoMet from the enzyme. In Clostridium botulinum (strain Okra / Type B1), this protein is S-adenosylmethionine synthase.